A 518-amino-acid chain; its full sequence is ATP synthase subunit alpha (518 aa).

Residue Gly169–Thr176 coordinates ATP.

This sequence belongs to the ATPase alpha/beta chains family. As to quaternary structure, F-type ATPases have 2 components, CF(1) - the catalytic core - and CF(0) - the membrane proton channel. CF(1) has five subunits: alpha(3), beta(3), gamma(1), delta(1), epsilon(1). CF(0) has three main subunits: a(1), b(2) and c(9-12). The alpha and beta chains form an alternating ring which encloses part of the gamma chain. CF(1) is attached to CF(0) by a central stalk formed by the gamma and epsilon chains, while a peripheral stalk is formed by the delta and b chains.

Its subcellular location is the cell membrane. The catalysed reaction is ATP + H2O + 4 H(+)(in) = ADP + phosphate + 5 H(+)(out). Functionally, produces ATP from ADP in the presence of a proton gradient across the membrane. The alpha chain is a regulatory subunit. The protein is ATP synthase subunit alpha of Enterococcus hirae (strain ATCC 9790 / DSM 20160 / JCM 8729 / LMG 6399 / NBRC 3181 / NCIMB 6459 / NCDO 1258 / NCTC 12367 / WDCM 00089 / R).